We begin with the raw amino-acid sequence, 543 residues long: Chaperonin GroEL (543 aa).

Residues 29 to 32 (TLGP), 86 to 90 (DGTTT), G413, 476 to 478 (NAA), and D492 each bind ATP.

It belongs to the chaperonin (HSP60) family. As to quaternary structure, forms a cylinder of 14 subunits composed of two heptameric rings stacked back-to-back. Interacts with the co-chaperonin GroES.

Its subcellular location is the cytoplasm. It catalyses the reaction ATP + H2O + a folded polypeptide = ADP + phosphate + an unfolded polypeptide.. In terms of biological role, together with its co-chaperonin GroES, plays an essential role in assisting protein folding. The GroEL-GroES system forms a nano-cage that allows encapsulation of the non-native substrate proteins and provides a physical environment optimized to promote and accelerate protein folding. This Streptococcus pyogenes serotype M18 (strain MGAS8232) protein is Chaperonin GroEL.